A 438-amino-acid polypeptide reads, in one-letter code: Thymidine phosphorylase (438 aa).

It belongs to the thymidine/pyrimidine-nucleoside phosphorylase family. As to quaternary structure, homodimer.

It carries out the reaction thymidine + phosphate = 2-deoxy-alpha-D-ribose 1-phosphate + thymine. It participates in pyrimidine metabolism; dTMP biosynthesis via salvage pathway; dTMP from thymine: step 1/2. Its function is as follows. The enzymes which catalyze the reversible phosphorolysis of pyrimidine nucleosides are involved in the degradation of these compounds and in their utilization as carbon and energy sources, or in the rescue of pyrimidine bases for nucleotide synthesis. The chain is Thymidine phosphorylase from Burkholderia cenocepacia (strain ATCC BAA-245 / DSM 16553 / LMG 16656 / NCTC 13227 / J2315 / CF5610) (Burkholderia cepacia (strain J2315)).